Consider the following 285-residue polypeptide: Protein FD (285 aa).

Residues 1–12 (MLSSAKHQRNHR) show a composition bias toward basic residues. Disordered stretches follow at residues 1–59 (MLSS…QKRS), 79–107 (NRHS…NSIF), 115–134 (LNQE…NGDS), 198–236 (SSSF…ARKQ), and 257–285 (KRQQ…TAPF). Polar residues predominate over residues 13–25 (LSATNKNQTLTKV). Low complexity predominate over residues 26–50 (SSISSSSPSSSSSSSSTSSSSPLPS). Polar residues predominate over residues 98–107 (HHNQNPNSIF). In terms of domain architecture, bZIP spans 214 to 277 (GNRRHKRMIK…AIQQPKKNTL (64 aa)). The segment at 216 to 235 (RRHKRMIKNRESAARSRARK) is basic motif. Residues 242–263 (LELEVAHLQAENARLKRQQDQL) form a leucine-zipper region. Residues 272–285 (PKKNTLQRSSTAPF) show a composition bias toward polar residues. Position 282 is a phosphothreonine (Thr-282).

This sequence belongs to the bZIP family. As to quaternary structure, self-interacts. Interacts with FT and FDP/BZIP27. Interacts with GRF3 and GRF4, and in a calcium-independent manner, with CPK6 and CPK33. In terms of processing, phosphorylated at Thr-282 in a calcium-dependent manner by CPK6 and CPK33. As to expression, highly expressed in shoot apex.

Its subcellular location is the nucleus. Transcription factor required for the transition to flowering promoted by FT. This chain is Protein FD, found in Arabidopsis thaliana (Mouse-ear cress).